A 513-amino-acid polypeptide reads, in one-letter code: ATP synthase subunit alpha (513 aa).

Position 169–176 (169–176 (GDRKTGKS)) interacts with ATP.

Belongs to the ATPase alpha/beta chains family. F-type ATPases have 2 components, CF(1) - the catalytic core - and CF(0) - the membrane proton channel. CF(1) has five subunits: alpha(3), beta(3), gamma(1), delta(1), epsilon(1). CF(0) has three main subunits: a(1), b(2) and c(9-12). The alpha and beta chains form an alternating ring which encloses part of the gamma chain. CF(1) is attached to CF(0) by a central stalk formed by the gamma and epsilon chains, while a peripheral stalk is formed by the delta and b chains.

It localises to the cell membrane. The enzyme catalyses ATP + H2O + 4 H(+)(in) = ADP + phosphate + 5 H(+)(out). In terms of biological role, produces ATP from ADP in the presence of a proton gradient across the membrane. The alpha chain is a regulatory subunit. The polypeptide is ATP synthase subunit alpha (Levilactobacillus brevis (strain ATCC 367 / BCRC 12310 / CIP 105137 / JCM 1170 / LMG 11437 / NCIMB 947 / NCTC 947) (Lactobacillus brevis)).